A 198-amino-acid chain; its full sequence is Peptidyl-tRNA hydrolase (198 aa).

Y15 contributes to the tRNA binding site. H20 (proton acceptor) is an active-site residue. The tRNA site is built by F66, N68, and N114.

This sequence belongs to the PTH family. As to quaternary structure, monomer.

The protein resides in the cytoplasm. It catalyses the reaction an N-acyl-L-alpha-aminoacyl-tRNA + H2O = an N-acyl-L-amino acid + a tRNA + H(+). Its function is as follows. Hydrolyzes ribosome-free peptidyl-tRNAs (with 1 or more amino acids incorporated), which drop off the ribosome during protein synthesis, or as a result of ribosome stalling. Catalyzes the release of premature peptidyl moieties from peptidyl-tRNA molecules trapped in stalled 50S ribosomal subunits, and thus maintains levels of free tRNAs and 50S ribosomes. The chain is Peptidyl-tRNA hydrolase from Cupriavidus taiwanensis (strain DSM 17343 / BCRC 17206 / CCUG 44338 / CIP 107171 / LMG 19424 / R1) (Ralstonia taiwanensis (strain LMG 19424)).